Here is a 152-residue protein sequence, read N- to C-terminus: Snaclec lebecin subunit alpha (152 aa).

An N-terminal signal peptide occupies residues 1–23 (MGRSISVSFGLLVVFLSLSGTGA). 3 disulfide bridges follow: Cys27/Cys38, Cys54/Cys147, and Cys122/Cys139. Positions 34-148 (YEGGCYYVFD…CELAYHFICS (115 aa)) constitute a C-type lectin domain.

Heterodimer with the beta subunit (AC W5XCJ6); disulfide-linked. As to expression, expressed by the venom gland.

Its subcellular location is the secreted. In terms of biological role, inhibits human breast cancer cells (MDA-MB231) migration and proliferation, as well as their adhesion to fibrinogen and fibronectin. This inhibition may be due to the binding to receptors of the integrin family, probably alpha-v/beta-3 (ITGAV/ITGB3) (40% inhibition of cell adhesion) and alpha-5/beta-1 (ITGA5/ITGB1) (by comparison with lebectin). This chain is Snaclec lebecin subunit alpha, found in Macrovipera lebetinus (Levantine viper).